The primary structure comprises 278 residues: Orotidine 5'-phosphate decarboxylase (278 aa).

Lys-95 functions as the Proton donor in the catalytic mechanism.

The protein belongs to the OMP decarboxylase family. Type 2 subfamily.

The catalysed reaction is orotidine 5'-phosphate + H(+) = UMP + CO2. The protein operates within pyrimidine metabolism; UMP biosynthesis via de novo pathway; UMP from orotate: step 2/2. The sequence is that of Orotidine 5'-phosphate decarboxylase from Methylibium petroleiphilum (strain ATCC BAA-1232 / LMG 22953 / PM1).